Reading from the N-terminus, the 406-residue chain is Probable delta-aminolevulinic acid dehydratase 2, chloroplastic (406 aa).

The N-terminal 34 residues, 1–34 (MTSSMFRSPCKIPSVKGFEQKSYVGLKAASYNVR), are a transit peptide targeting the chloroplast. Lys275 acts as the Schiff-base intermediate with substrate in catalysis. Residues Arg285 and Lys291 each coordinate 5-aminolevulinate. Residue Glu307 participates in Mg(2+) binding. The active-site Schiff-base intermediate with substrate is the Lys322. Residues Ser348 and Tyr387 each contribute to the 5-aminolevulinate site.

It belongs to the ALAD family. As to quaternary structure, homooctamer. It depends on Mg(2+) as a cofactor.

The protein localises to the plastid. It localises to the chloroplast. It catalyses the reaction 2 5-aminolevulinate = porphobilinogen + 2 H2O + H(+). The protein operates within porphyrin-containing compound metabolism; protoporphyrin-IX biosynthesis; coproporphyrinogen-III from 5-aminolevulinate: step 1/4. It participates in porphyrin-containing compound metabolism; chlorophyll biosynthesis. Its function is as follows. Catalyzes an early step in the biosynthesis of tetrapyrroles. Binds two molecules of 5-aminolevulinate per subunit, each at a distinct site, and catalyzes their condensation to form porphobilinogen. This is Probable delta-aminolevulinic acid dehydratase 2, chloroplastic (HEMB2) from Arabidopsis thaliana (Mouse-ear cress).